We begin with the raw amino-acid sequence, 207 residues long: Lipid A acyltransferase PagP (207 aa).

The signal sequence occupies residues 1-24 (MKFDLTTAYTLSIPLLASSGTVLA). Catalysis depends on residues His79, Asp122, and Ser123.

The protein belongs to the lipid A palmitoyltransferase family. As to quaternary structure, homodimer.

It localises to the cell outer membrane. The enzyme catalyses a lipid A + a 1,2-diacyl-sn-glycero-3-phosphocholine = a hepta-acyl lipid A + a 2-acyl-sn-glycero-3-phosphocholine. The catalysed reaction is a lipid IVA + a 1,2-diacyl-sn-glycero-3-phosphocholine = a lipid IVB + a 2-acyl-sn-glycero-3-phosphocholine. It catalyses the reaction a lipid IIA + a 1,2-diacyl-sn-glycero-3-phosphocholine = a lipid IIB + a 2-acyl-sn-glycero-3-phosphocholine. Transfers a fatty acid residue from the sn-1 position of a phospholipid to the N-linked hydroxyfatty acid chain on the proximal unit of lipid A or its precursors. This is Lipid A acyltransferase PagP from Photorhabdus asymbiotica subsp. asymbiotica (strain ATCC 43949 / 3105-77) (Xenorhabdus luminescens (strain 2)).